A 260-amino-acid polypeptide reads, in one-letter code: UPF0246 protein Tola_0968 (260 aa).

This sequence belongs to the UPF0246 family.

In Tolumonas auensis (strain DSM 9187 / NBRC 110442 / TA 4), this protein is UPF0246 protein Tola_0968.